A 156-amino-acid polypeptide reads, in one-letter code: ATP synthase subunit b (156 aa).

The helical transmembrane segment at 11-31 (AIAFVLFVLFCMKYVWPPIMA) threads the bilayer.

The protein belongs to the ATPase B chain family. As to quaternary structure, F-type ATPases have 2 components, F(1) - the catalytic core - and F(0) - the membrane proton channel. F(1) has five subunits: alpha(3), beta(3), gamma(1), delta(1), epsilon(1). F(0) has three main subunits: a(1), b(2) and c(10-14). The alpha and beta chains form an alternating ring which encloses part of the gamma chain. F(1) is attached to F(0) by a central stalk formed by the gamma and epsilon chains, while a peripheral stalk is formed by the delta and b chains.

The protein resides in the cell inner membrane. Its function is as follows. F(1)F(0) ATP synthase produces ATP from ADP in the presence of a proton or sodium gradient. F-type ATPases consist of two structural domains, F(1) containing the extramembraneous catalytic core and F(0) containing the membrane proton channel, linked together by a central stalk and a peripheral stalk. During catalysis, ATP synthesis in the catalytic domain of F(1) is coupled via a rotary mechanism of the central stalk subunits to proton translocation. Component of the F(0) channel, it forms part of the peripheral stalk, linking F(1) to F(0). This chain is ATP synthase subunit b, found in Cronobacter sakazakii (strain ATCC BAA-894) (Enterobacter sakazakii).